The chain runs to 1368 residues: DNA-directed RNA polymerase subunit beta (1368 aa).

This sequence belongs to the RNA polymerase beta chain family. As to quaternary structure, the RNAP catalytic core consists of 2 alpha, 1 beta, 1 beta' and 1 omega subunit. When a sigma factor is associated with the core the holoenzyme is formed, which can initiate transcription.

It catalyses the reaction RNA(n) + a ribonucleoside 5'-triphosphate = RNA(n+1) + diphosphate. In terms of biological role, DNA-dependent RNA polymerase catalyzes the transcription of DNA into RNA using the four ribonucleoside triphosphates as substrates. The chain is DNA-directed RNA polymerase subunit beta from Legionella pneumophila (strain Paris).